A 143-amino-acid chain; its full sequence is Transcription antitermination protein NusB (143 aa).

This sequence belongs to the NusB family.

Functionally, involved in transcription antitermination. Required for transcription of ribosomal RNA (rRNA) genes. Binds specifically to the boxA antiterminator sequence of the ribosomal RNA (rrn) operons. This is Transcription antitermination protein NusB from Dehalococcoides mccartyi (strain CBDB1).